The chain runs to 71 residues: Large ribosomal subunit protein bL31 (71 aa).

C16, C18, C37, and C40 together coordinate Zn(2+).

It belongs to the bacterial ribosomal protein bL31 family. Type A subfamily. As to quaternary structure, part of the 50S ribosomal subunit. Zn(2+) is required as a cofactor.

Its function is as follows. Binds the 23S rRNA. This Aeromonas salmonicida (strain A449) protein is Large ribosomal subunit protein bL31.